A 448-amino-acid polypeptide reads, in one-letter code: Neurexin-1b-beta (448 aa).

Residues 1–38 (MFGGWRLVVWQIFSEIITRRLGFWICLYFAALSVGMIS) form the signal peptide. Topologically, residues 39-375 (GSEPLVRTRH…EVFRESNGTT (337 aa)) are extracellular. A Laminin G-like domain is found at 71–269 (STYVFGRQGG…DPNVRMEGSV (199 aa)). Residues 376–396 (GMVVGIVAGAALCILILLYAM) traverse the membrane as a helical segment. Residues 397-448 (YKYRNRDEGSYHVDESRNYICNSNGAALKEKNTADDDSGSKSKKNKNKEYYV) are Cytoplasmic-facing. The span at 426-436 (EKNTADDDSGS) shows a compositional bias: basic and acidic residues. A disordered region spans residues 426-448 (EKNTADDDSGSKSKKNKNKEYYV).

The protein belongs to the neurexin family.

It is found in the membrane. In terms of biological role, neuronal cell surface protein that may be involved in cell recognition and cell adhesion. May play a role in formation or maintenance of synaptic junctions. The sequence is that of Neurexin-1b-beta (nrxn1b) from Danio rerio (Zebrafish).